We begin with the raw amino-acid sequence, 1142 residues long: Potassium channel subfamily T member 2 (1142 aa).

Residues 1–63 (MVDLESEVPP…KNQRSSLRIR (63 aa)) are Cytoplasmic-facing. The chain crosses the membrane as a helical span at residues 64-84 (LFNFSLKLLSCLLYIIRVLLE). At 85–101 (KPSQGNDWSHIFWVNRS) the chain is on the extracellular side. A glycan (N-linked (GlcNAc...) asparagine) is linked at asparagine 99. The chain crosses the membrane as a helical span at residues 102–122 (LPLWGLQVSVALISLFETILL). Residues 123–137 (GYLSYKGNIWEQILR) lie on the Cytoplasmic side of the membrane. The helical transmembrane segment at 138 to 158 (VPFILEIINAVPFIISIFWPT) threads the bilayer. The Extracellular portion of the chain corresponds to 159–160 (LR). Residues 161-173 (NLFVPVFLNCWLA) form a helical membrane-spanning segment. Residues 174–198 (KHALENMINDLHRAIQRTQSAMFNQ) lie on the Cytoplasmic side of the membrane. Residues 199–219 (VLILISTLLCLIFTCICGIQH) form a helical membrane-spanning segment. Residues 220 to 228 (LERIGKKLN) are Extracellular-facing. The pore-forming intramembrane region spans 229-249 (LFDSLYFCIVTFSTVGFGDVT). Over 250–256 (PETWSSK) the chain is Extracellular. The chain crosses the membrane as a helical span at residues 257–277 (LFVVAMICVALVVLPIQFEQL). Topologically, residues 278–1142 (AYLWMERQKS…VQDSREETQL (865 aa)) are cytoplasmic. RCK N-terminal domains are found at residues 299 to 435 (EKHV…DHVV) and 725 to 865 (NKLI…CYSL). Disordered regions lie at residues 989–1044 (DTKD…EKIT) and 1118–1142 (PNSE…ETQL). The segment covering 1017–1037 (LRRKSMQWARRLSRKGPKHSG) has biased composition (basic residues). A compositionally biased stretch (polar residues) spans 1118-1129 (PNSEPSRKNSIC).

It belongs to the potassium channel family. Calcium-activated (TC 1.A.1.3) subfamily. KCa4.2/KCNT2 sub-subfamily. As to quaternary structure, homotetramer. Forms heteromer with KCNT1; heteromeric channels differ from those of homomeric channels in their unitary conductance, kinetic behavior, subcellular localization, and response to activation of protein kinase C. In terms of processing, phosphorylated by protein kinase C. Phosphorylation of the C-terminal domain inhibits channel activity. Detected in brain, and at low levels in heart. Detected in brainstem, including auditory neurons such as the medial nucleus of the trapezoid body. Detected in the olfactory bulb, red nucleus, facial nucleus, pontine nucleus, oculomotor nucleus, substantia nigra, deep cerebellar nuclei, vestibular nucleus, and the thalamus. Detected in hippocampal CA1, CA2, and CA3 regions, the dentate gyrus, supraoptic nucleus, hypothalamus, dorsal root ganglion, and cortical layers II, III, and V. Detected in striatum cholinergic interneurons.

It localises to the cell membrane. The enzyme catalyses K(+)(in) = K(+)(out). Its activity is regulated as follows. Are normally in a closed state unless activated by an increase in intracellular Na(+) and Cl(-). Inhibited upon stimulation of G-protein coupled receptors, such as CHRM1 and GRM1. There is conflicting data about the effect of ATP on KNCT2 channels activity. Intracellular ATP was initially report to inhibit the channel activity. However, others studies conclude that KNCT2 channels are not inhibited by intracellular ATP. Sodium-activated and chloride-activated potassium channel. Produces rapidly activating outward rectifier K(+) currents. Contributes to regulate neuronal excitability. This is Potassium channel subfamily T member 2 (Kcnt2) from Rattus norvegicus (Rat).